The chain runs to 237 residues: Ribosomal RNA small subunit methyltransferase G (237 aa).

S-adenosyl-L-methionine is bound by residues Gly78, Phe83, 129-130, and Arg148; that span reads AE.

It belongs to the methyltransferase superfamily. RNA methyltransferase RsmG family.

It is found in the cytoplasm. Functionally, specifically methylates the N7 position of a guanine in 16S rRNA. This chain is Ribosomal RNA small subunit methyltransferase G, found in Streptococcus pyogenes serotype M2 (strain MGAS10270).